We begin with the raw amino-acid sequence, 590 residues long: Aspartate--tRNA(Asp/Asn) ligase (590 aa).

Glu-173 is a binding site for L-aspartate. Positions 197–200 (QIFK) are aspartate. Arg-219 contacts L-aspartate. Residues 219 to 221 (RDE) and Gln-228 each bind ATP. An L-aspartate-binding site is contributed by His-450. An ATP-binding site is contributed by Glu-484. Position 491 (Arg-491) interacts with L-aspartate. 536–539 (GLDR) contacts ATP.

Belongs to the class-II aminoacyl-tRNA synthetase family. Type 1 subfamily. As to quaternary structure, homodimer.

It is found in the cytoplasm. The catalysed reaction is tRNA(Asx) + L-aspartate + ATP = L-aspartyl-tRNA(Asx) + AMP + diphosphate. In terms of biological role, aspartyl-tRNA synthetase with relaxed tRNA specificity since it is able to aspartylate not only its cognate tRNA(Asp) but also tRNA(Asn). Reaction proceeds in two steps: L-aspartate is first activated by ATP to form Asp-AMP and then transferred to the acceptor end of tRNA(Asp/Asn). The sequence is that of Aspartate--tRNA(Asp/Asn) ligase from Coxiella burnetii (strain Dugway 5J108-111).